The following is a 190-amino-acid chain: Adenine phosphoribosyltransferase (190 aa).

This sequence belongs to the purine/pyrimidine phosphoribosyltransferase family. Homodimer.

The protein localises to the cytoplasm. The enzyme catalyses AMP + diphosphate = 5-phospho-alpha-D-ribose 1-diphosphate + adenine. It functions in the pathway purine metabolism; AMP biosynthesis via salvage pathway; AMP from adenine: step 1/1. Functionally, catalyzes a salvage reaction resulting in the formation of AMP, that is energically less costly than de novo synthesis. In Cupriavidus pinatubonensis (strain JMP 134 / LMG 1197) (Cupriavidus necator (strain JMP 134)), this protein is Adenine phosphoribosyltransferase.